The following is a 175-amino-acid chain: MGAAPSRIVDNLLDDTNFDRAEIERLKKRFMKLDKDSSGSIDKTEFMSIPGVSANPLAKRIIEVFDEDNSGDVDFQEFITSLSIFSGRGETDAKLRFAFRIYDIDKDGYISNGELFIVLKIMVGTNLEDEQLQQIVDRTIMENDVDGDGKLSFEEFKKAAETTEVIQSLTLQHNI.

4 consecutive EF-hand domains span residues 21 to 56 (AEIE…SANP), 58 to 88 (AKRI…FSGR), 90 to 125 (ETDA…MVGT), and 131 to 166 (QLQQ…TEVI). 20 residues coordinate Ca(2+): Asp34, Asp36, Ser38, Ser40, Glu45, Asp66, Asp68, Ser70, Asp72, Glu77, Asp103, Asp105, Asp107, Tyr109, Glu114, Asp144, Asp146, Asp148, Lys150, and Glu155.

This sequence belongs to the calcineurin regulatory subunit family. As to quaternary structure, composed of a catalytic subunit (A) and a regulatory subunit (B).

In terms of biological role, regulatory subunit of calcineurin, a calcium-dependent, calmodulin stimulated protein phosphatase. Confers calcium sensitivity. This is Calcineurin subunit B (CNB1) from Kluyveromyces lactis (strain ATCC 8585 / CBS 2359 / DSM 70799 / NBRC 1267 / NRRL Y-1140 / WM37) (Yeast).